We begin with the raw amino-acid sequence, 490 residues long: Limb region 1 protein (490 aa).

Residues 1 to 19 (MEGQDEVSAREQHFHSQVR) are Extracellular-facing. Residues 20 to 40 (ESTICFLLFAILYIVSYFIII) form a helical membrane-spanning segment. Topologically, residues 41–62 (RYKRKSDEQEDEDAVVNRISLF) are cytoplasmic. The helical transmembrane segment at 63–83 (LSTFTLAVSAGAVLLLPFSII) threads the bilayer. Over 84–110 (SNEILLAFPHNYYIQWLNGSLIHGLWN) the chain is Extracellular. The helical transmembrane segment at 111–131 (LASLFSNLCLFVLMPFAFFFL) threads the bilayer. Residues 132 to 151 (ESEGFAGLKKGIRARILETL) are Cytoplasmic-facing. A helical transmembrane segment spans residues 152-172 (VMLLLLALLILGMVWVASALI). Topologically, residues 173–187 (DSDAASMESLYDLWE) are extracellular. A helical membrane pass occupies residues 188–208 (FYLPYLYSCISLMGCLLLLLC). Residues 209–291 (TPVGLSRMFT…RKKASAWERN (83 aa)) are Cytoplasmic-facing. A coiled-coil region spans residues 256–287 (SSVEYNVMELEQELENVKILKTKLERRKKASA). A helical membrane pass occupies residues 292–312 (LVYPAVMVLLLIETSISVLLV). The Extracellular segment spans residues 313 to 339 (ACNILCLLVDETAMPKGTRGPGIGSAS). A helical transmembrane segment spans residues 340–360 (LSTFGFVGAALEIILIFYLMV). Residues 361–383 (SSVVGFYSLRFFGNFTPKKDDTT) lie on the Cytoplasmic side of the membrane. The helical transmembrane segment at 384–404 (MTKIIGNCVSILVLSSALPVM) threads the bilayer. At 405–426 (SRTLGITRFDLLGDFGRFNWLG) the chain is on the extracellular side. A helical transmembrane segment spans residues 427–447 (NFYIVLSYNLLFAIMTTLCLI). The Cytoplasmic portion of the chain corresponds to 448 to 490 (RKFTSAVREELFKALGLHKLHLSDTSRDSETTKPSANGHQKAL).

This sequence belongs to the LIMR family.

It is found in the membrane. In terms of biological role, putative membrane receptor. This is Limb region 1 protein (Lmbr1) from Mus musculus (Mouse).